Here is a 101-residue protein sequence, read N- to C-terminus: Small ribosomal subunit protein uS14 (101 aa).

Residues 50–70 are disordered; that stretch reads SLPRDSSPSRQRKRCRQTGRP. Over residues 59 to 68 the composition is skewed to basic residues; the sequence is RQRKRCRQTG.

It belongs to the universal ribosomal protein uS14 family. Part of the 30S ribosomal subunit. Contacts proteins S3 and S10.

Binds 16S rRNA, required for the assembly of 30S particles and may also be responsible for determining the conformation of the 16S rRNA at the A site. This chain is Small ribosomal subunit protein uS14, found in Erwinia tasmaniensis (strain DSM 17950 / CFBP 7177 / CIP 109463 / NCPPB 4357 / Et1/99).